A 389-amino-acid chain; its full sequence is MATKRDYYEVLGLAKGASDDEIKKAYRKLSKKYHPDINKEADAEEKFKEVSEAYEVLSDPQKKAAYDQYGHAGTDPNYGGGAGGFGGFGGGGFSSSGFGGFEDIFDSFFGGGGGRSVDPNAPRQGADLQYTIQLKFEEAIFGVEKEIKYNREDTCATCGGNGAKPGTHPETCHKCHGSGTINVERQTPLGRMMSRQTCDVCHGTGKEIKEPCPTCHGTGHEKKAHTVKVNVPAGVEDGQQMRLANQGEAGTNGGPYGDLYVVFRVEDSDIFDRDGAEIYYDLPVSFVQAALGDEVTVPTVHGDVKLKIPAGTQTGTNFRLRGKGAPRLRGGGNGDQHVKVKLITPKNLNEEQKDALRAFAKAGGQNVTEQQEEGFFDKMKDAFGGKKKK.

Positions 6–70 (DYYEVLGLAK…QKKAAYDQYG (65 aa)) constitute a J domain. The CR-type zinc finger occupies 142 to 224 (GVEKEIKYNR…CHGTGHEKKA (83 aa)). Residues C155, C158, C172, C175, C198, C201, C212, and C215 each contribute to the Zn(2+) site. CXXCXGXG motif repeat units follow at residues 155–162 (CATCGGNG), 172–179 (CHKCHGSG), 198–205 (CDVCHGTG), and 212–219 (CPTCHGTG).

Belongs to the DnaJ family. Homodimer. Zn(2+) serves as cofactor.

Its subcellular location is the cytoplasm. Its function is as follows. Participates actively in the response to hyperosmotic and heat shock by preventing the aggregation of stress-denatured proteins and by disaggregating proteins, also in an autonomous, DnaK-independent fashion. Unfolded proteins bind initially to DnaJ; upon interaction with the DnaJ-bound protein, DnaK hydrolyzes its bound ATP, resulting in the formation of a stable complex. GrpE releases ADP from DnaK; ATP binding to DnaK triggers the release of the substrate protein, thus completing the reaction cycle. Several rounds of ATP-dependent interactions between DnaJ, DnaK and GrpE are required for fully efficient folding. Also involved, together with DnaK and GrpE, in the DNA replication of plasmids through activation of initiation proteins. The protein is Chaperone protein DnaJ of Enterococcus faecalis (strain ATCC 700802 / V583).